The chain runs to 1265 residues: Nestin (1265 aa).

Residues 1–16 (MELLGVRQPFGPQFQE) form a head region. Positions 17–52 (EKYQMLELNHRLESYLGRVKLLEEENKLLREEIHTL) are coil 1A. Residues 17-324 (EKYQMLELNH…ALLDSEGLRI (308 aa)) form the IF rod domain. The linker 1 stretch occupies residues 53 to 64 (KSSRDPAGQRKA). Positions 65 to 160 (QEEALSQARR…QVHQENMETM (96 aa)) are coil 1B. Residues 161–183 (QASLKQTKQVLMAPQRVQATSIP) form a linker 12 region. The interval 184–203 (DLGQEYGYKAAQAWQEAANN) is coil 2A. Residues 204-206 (YQK) are linker 2. Residues 207 to 324 (QVGRLEESLN…ALLDSEGLRI (118 aa)) are coil 2B. The segment at 325-1265 (DRPTPNKTSS…EGDSWSSGDE (941 aa)) is tail. The segment covering 383–402 (PSWTLTRGTPQRPPSSTSMT) has biased composition (polar residues). Disordered regions lie at residues 383-521 (PSWT…TEVS), 667-830 (FEVE…PDME), 863-1073 (HESL…KASQ), 1093-1116 (AQTTHASMDEHSSISPVNENLESS), and 1232-1265 (IRDDKQKDGQPAQSKIVQSDDSADEGDSWSSGDE). The segment covering 403 to 418 (EKTEDHISEETKRSAE) has biased composition (basic and acidic residues). The span at 422-441 (DQLQQEKVQQDWTLESTLPK) shows a compositional bias: polar residues. Residues 444-459 (AEPKPELQPEEIKVED) are compositionally biased toward basic and acidic residues. The segment covering 479–496 (LTSVPAEQQGSMSQTPET) has biased composition (polar residues). 2 stretches are compositionally biased toward acidic residues: residues 508 to 520 (EVSEDGKDEDTEV) and 730 to 739 (LNEDQSEAEE). Basic and acidic residues-rich tracts occupy residues 784 to 796 (YKSDEETSHHIGE), 803 to 819 (EKERIDQGHLNEKRFNT), and 863 to 897 (HESLDVVVQESERKGNLEKEDSGDADNMRDNKEED). Residues 901-910 (FEQNENQQLT) are compositionally biased toward polar residues. Basic and acidic residues predominate over residues 911 to 935 (EHQHVHTEQVEDKPVHSHETQEHVN). A compositionally biased stretch (low complexity) spans 943-956 (SERSQQEQLEESSL). The span at 1015-1043 (PNASQCFQNTSLLAAATPNEQPLTFTNEV) shows a compositional bias: polar residues. Residues 1061 to 1070 (SEEKSTDEPK) are compositionally biased toward basic and acidic residues. Polar residues-rich tracts occupy residues 1105 to 1116 (SISPVNENLESS) and 1242 to 1251 (PAQSKIVQSD). The segment covering 1252 to 1265 (DSADEGDSWSSGDE) has biased composition (acidic residues).

Belongs to the intermediate filament family. In terms of assembly, forms homodimers and homotetramers in vitro. In mixtures with other intermediate filament proteins such as vimentin and alpha-internexin, preferentially forms heterodimers. As to expression, widely expressed throughout the developing nervous system at 24 hours post-fertilization (hpf). As development progresses, expression becomes restricted to proliferative zones of the developing and postembryonic central nervous system. In the peripheral nervous system, expressed in the cranial ganglia. Also expressed in mesodermal muscle precursor cells and in cranial mesenchymal tissue.

Its function is as follows. Promotes the disassembly of phosphorylated vimentin intermediate filaments (IF) during mitosis and may play a role in the trafficking and distribution of IF proteins and other cellular factors to daughter cells during progenitor cell division. Required for survival, renewal and mitogen-stimulated proliferation of neural progenitor cells. Required for brain and eye development. The protein is Nestin (nes) of Danio rerio (Zebrafish).